The chain runs to 316 residues: Phosphatidylinositol mannoside acyltransferase (316 aa).

Residue histidine 137 is the Proton acceptor of the active site. Hexadecanoyl-CoA is bound by residues histidine 137 and arginine 175. The active site involves glutamate 211. Glutamate 240 lines the hexadecanoyl-CoA pocket.

This sequence belongs to the LpxL/LpxM/LpxP family.

It is found in the cell inner membrane. The enzyme catalyses a 2,6-O-bis(alpha-D-mannopyranosyl)-1-phosphatidyl-1D-myo-inositol + an acyl-CoA = a 2-O-(alpha-D-mannosyl)-6-O-(6-O-acyl-alpha-D-mannosyl)-1-phosphatidyl-1D-myo-inositol + CoA. It catalyses the reaction a 1,2-diacyl-sn-glycero-3-phospho-[alpha-D-mannopyranosyl-(1&lt;-&gt;6)-D-myo-inositol] + an acyl-CoA = a 1,2-diacyl-sn-glycero-3-phospho-[alpha-D-6-acyl-mannopyranosyl-(1&lt;-&gt;6)-D-myo-inositol] + CoA. The protein operates within phospholipid metabolism; phosphatidylinositol metabolism. Its function is as follows. Catalyzes the transfer of a palmitoyl moiety from palmitoyl-CoA to the 6-position of the mannose ring linked to the 2-position of myo-inositol in phosphatidyl-myo-inositol monomannoside (PIM1) or dimannoside (PIM2). In Mycobacterium tuberculosis (strain CDC 1551 / Oshkosh), this protein is Phosphatidylinositol mannoside acyltransferase.